Consider the following 137-residue polypeptide: Large ribosomal subunit protein uL16 (137 aa).

It belongs to the universal ribosomal protein uL16 family. In terms of assembly, part of the 50S ribosomal subunit.

Its function is as follows. Binds 23S rRNA and is also seen to make contacts with the A and possibly P site tRNAs. In Streptococcus thermophilus (strain ATCC BAA-491 / LMD-9), this protein is Large ribosomal subunit protein uL16.